We begin with the raw amino-acid sequence, 469 residues long: Ribulose bisphosphate carboxylase large chain (469 aa).

Lys5 carries the post-translational modification N6,N6,N6-trimethyllysine. Substrate-binding residues include Asn114 and Thr164. Lys166 functions as the Proton acceptor in the catalytic mechanism. Lys168 lines the substrate pocket. Residues Lys192, Asp194, and Glu195 each coordinate Mg(2+). Lys192 carries the N6-carboxylysine modification. His285 serves as the catalytic Proton acceptor. Residues Arg286, His318, and Ser370 each contribute to the substrate site.

The protein belongs to the RuBisCO large chain family. Type I subfamily. As to quaternary structure, heterohexadecamer of 8 large chains and 8 small chains; disulfide-linked. The disulfide link is formed within the large subunit homodimers. Mg(2+) is required as a cofactor. In terms of processing, the disulfide bond which can form in the large chain dimeric partners within the hexadecamer appears to be associated with oxidative stress and protein turnover.

It is found in the plastid. The protein resides in the chloroplast. It carries out the reaction 2 (2R)-3-phosphoglycerate + 2 H(+) = D-ribulose 1,5-bisphosphate + CO2 + H2O. It catalyses the reaction D-ribulose 1,5-bisphosphate + O2 = 2-phosphoglycolate + (2R)-3-phosphoglycerate + 2 H(+). Its function is as follows. RuBisCO catalyzes two reactions: the carboxylation of D-ribulose 1,5-bisphosphate, the primary event in carbon dioxide fixation, as well as the oxidative fragmentation of the pentose substrate in the photorespiration process. Both reactions occur simultaneously and in competition at the same active site. This chain is Ribulose bisphosphate carboxylase large chain, found in Fleroya rubrostipulata (Mitragyna rubrostipulata).